Consider the following 39-residue polypeptide: MTIDRTYPIFTVRWLAIHGLAVPTVFFLGSISAMQFIQR.

A helical membrane pass occupies residues 14 to 30 (WLAIHGLAVPTVFFLGS). Histidine 18 contributes to the heme binding site.

As to quaternary structure, heterodimer of an alpha subunit and a beta subunit. PSII is composed of 1 copy each of membrane proteins PsbA, PsbB, PsbC, PsbD, PsbE, PsbF, PsbH, PsbI, PsbJ, PsbK, PsbL, PsbM, PsbT, PsbX, PsbY, PsbZ, Psb30/Ycf12, at least 3 peripheral proteins of the oxygen-evolving complex and a large number of cofactors. It forms dimeric complexes. The cofactor is heme b. The N-terminus is blocked.

Its subcellular location is the plastid. It is found in the chloroplast thylakoid membrane. In terms of biological role, this b-type cytochrome is tightly associated with the reaction center of photosystem II (PSII). PSII is a light-driven water:plastoquinone oxidoreductase that uses light energy to abstract electrons from H(2)O, generating O(2) and a proton gradient subsequently used for ATP formation. It consists of a core antenna complex that captures photons, and an electron transfer chain that converts photonic excitation into a charge separation. This is Cytochrome b559 subunit beta from Spinacia oleracea (Spinach).